A 559-amino-acid chain; its full sequence is Regulatory protein PHO2 (559 aa).

Disordered stretches follow at residues 16-88, 132-158, 293-333, and 534-559; these read ATDL…KGEA, LRKK…DYDR, INSN…AKDN, and PTDS…HRWI. Composition is skewed to low complexity over residues 24–52 and 63–74; these read HDQQ…IQTQ and NDMSASSNASDS. The segment at residues 77 to 136 is a DNA-binding region (homeobox); it reads QRPKRTRAKGEALDVLKRKFEINPTPSLVERKKISDLIGMPEKNVRIWFQNRRAKLRKKQ. Residues 141–151 are compositionally biased toward polar residues; the sequence is KDTIPSSQSRD. The segment covering 293-307 has biased composition (low complexity); the sequence is INSNNTSDKNNSNTN. Positions 308 to 323 are enriched in acidic residues; it reads NDDDNDDNSNEDNDNS. Positions 324–333 are enriched in basic and acidic residues; that stretch reads SEDKRNAKDN. T542 carries the phosphothreonine modification.

The protein localises to the nucleus. In terms of biological role, regulator in phosphate metabolism and acts as a derepressor of another central regulator PHO5. Binds to the upstream activator sequence (UAS) of PHO5. It also binds to the TRP4, HIS4, and CYC1 promoters. The sequence is that of Regulatory protein PHO2 (PHO2) from Saccharomyces cerevisiae (strain ATCC 204508 / S288c) (Baker's yeast).